The primary structure comprises 190 residues: Tegument antigen (190 aa).

EF-hand domains lie at 8 to 43 (SQME…YRLD) and 51 to 77 (IARF…KVSE). The Ca(2+) site is built by aspartate 55, aspartate 57, aspartate 59, lysine 61, and glutamate 66.

Adult and schistosomula tegument.

The protein is Tegument antigen of Schistosoma mansoni (Blood fluke).